Reading from the N-terminus, the 952-residue chain is MAEGGAADLDIQRSDIATLLKTSLRKGDTWYLVDSRWFKQWKKYVGFDSWDKYQMGDQNVYPGPIDNSGLLRDGDAQSLKEHLIDELDYILLPTEGWNKLVSWYTLMEGQEPIARKVVEQGMFVKHCKVEVYLTELKLCENGNMNNVVTRRFSKADTIDTIEKEIRKIFNIPDEKETRLWNKYMSNTFEPLNKPDSTIQDAGLYQGQVLVIEQKNEDGTWPRGPSTPNVKNSNYCLPSYTAYKNYDYSEPGRNNEQPGLCGLSNLGNTCFMNSAFQCLSNTPPLTEYFLNDKYQEELNFDNPLGMRGEIAKSYAELIKQMWSGKYSYVTPRAFKTQVGRFAPQFSGYQQQDCQELLAFLLDGLHEDLNRIRKKPYIQLKDADGRPDKVVAEEAWENHLKRNDSIIVDIFHGLFKSTLVCPECAKISVTFDPFCYLTLPLPMKKERTLEVYLVRMDPLTKPMQYKVVVPKIGNILDLCTALSLLSGVPADKMIVTDIYNHRFHRIFAMDENLSSIMERDDIYVFEININRTEDTEHVIIPVCLREKFRHSSYTHHTGSSLFGQPFLMAVPRNNTEDKLYNLLLVRMCRYVKISTDTEDTEGSLHCCKDQNINGNGPNGIHEEGSPSEMETDEPDDESSQDQELPSENENSQSEDSVGGDNDSENGLCTEETCRGQLTGHKKRLFTFQFNNLGNTDINYIKDDTRHIRFDDRQLRLDERSFLALDWDPDLKKRYFDENAAEDFEKHESVEYKPPKKPFVKLKDCIELFTTKEKLGAEDPWYCPNCKEHQQATKKLDLWSLPPVLVVHLKRFSYSRYMRDKLDTLVDFPINDLDMSEFLINPNAGPCRYNLIAVSNHYGGMGGGHYTAFAKNKDDGKWYYFDDSSVSTASEDQIVSKAAYVLFYQRQDTFSGTGFFPLDRETKGASAATGIPLESDEDSNDNDNDIENENCMHTN.

A2 carries the post-translational modification N-acetylalanine. The segment at A2–G223 is mediates interaction with SART3. In terms of domain architecture, DUSP spans A7–V118. Phosphothreonine is present on T226. The 645-residue stretch at C260–Q904 folds into the USP domain. The active-site Nucleophile is C269. T573 carries the post-translational modification Phosphothreonine. The disordered stretch occupies residues T598–C666. Positions M627–S644 are enriched in acidic residues. H862 serves as the catalytic Proton acceptor. The interval S923–N952 is disordered. The segment covering E931–N945 has biased composition (acidic residues). Phosphoserine occurs at positions 932 and 936.

The protein belongs to the peptidase C19 family. In terms of assembly, a homodimer structure has been reported; however it is unclear whether the protein form a homodimer in vivo. Identified in a complex with the COP9 signalosome complex (CSN). Interacts with SMAD1, SMAD2 and SMAD3; the interaction is direct. Forms a complex with SMURF2 and SMAD7. Interacts with TGFBR1. Interacts with SART3; the interaction is direct. May interact with RNF20 and RNF40. May interact with PRKN. Interacts with INCA1. In terms of processing, phosphorylated. Phosphorylation protects against ubiquitination and subsequent degradation by the proteasome. Post-translationally, ubiquitinated, leading to degradation by the proteasome.

It localises to the cytoplasm. The protein localises to the nucleus. It is found in the mitochondrion. The enzyme catalyses Thiol-dependent hydrolysis of ester, thioester, amide, peptide and isopeptide bonds formed by the C-terminal Gly of ubiquitin (a 76-residue protein attached to proteins as an intracellular targeting signal).. Functionally, hydrolase that removes conjugated ubiquitin from target proteins and regulates various pathways such as the TGF-beta receptor signaling, NF-kappa-B and RNF41/NRDP1-PRKN pathways. Acts as a key regulator of TGF-beta receptor signaling pathway, but the precise mechanism is still unclear: according to a report, acts by promoting deubiquitination of monoubiquitinated R-SMADs (SMAD1, SMAD2 and/or SMAD3), thereby alleviating inhibition of R-SMADs and promoting activation of TGF-beta target genes. According to another reports, regulates the TGF-beta receptor signaling pathway by mediating deubiquitination and stabilization of TGFBR1, leading to an enhanced TGF-beta signal. Able to mediate deubiquitination of monoubiquitinated substrates, 'Lys-27'-, 'Lys-48'- and 'Lys-63'-linked polyubiquitin chains. May also regulate gene expression and/or DNA repair through the deubiquitination of histone H2B. Acts as an inhibitor of mitophagy by counteracting the action of parkin (PRKN): hydrolyzes cleavage of 'Lys-48'- and 'Lys-63'-linked polyubiquitin chains attached by parkin on target proteins such as MFN2, thereby reducing parkin's ability to drive mitophagy. Acts as an associated component of COP9 signalosome complex (CSN) and regulates different pathways via this association: regulates NF-kappa-B by mediating deubiquitination of NFKBIA and deubiquitinates substrates bound to VCP. Involved in endosome organization by mediating deubiquitination of SQSTM1: ubiquitinated SQSTM1 forms a molecular bridge that restrains cognate vesicles in the perinuclear region and its deubiquitination releases target vesicles for fast transport into the cell periphery. Acts as a negative regulator of antifungal immunity by mediating 'Lys-27'-linked deubiquitination of CARD9, thereby inactivating CARD9. The chain is Ubiquitin carboxyl-terminal hydrolase 15 (USP15) from Bos taurus (Bovine).